Reading from the N-terminus, the 256-residue chain is Small ribosomal subunit protein eS1 (256 aa).

Basic residues predominate over residues 1–18 (MAVGKNKRLSKGKKGLKK). Residues 1-20 (MAVGKNKRLSKGKKGLKKKA) are disordered. Alanine 2 carries the N-acetylalanine; partial modification.

It belongs to the eukaryotic ribosomal protein eS1 family. As to quaternary structure, component of the small ribosomal subunit. Mature ribosomes consist of a small (40S) and a large (60S) subunit. The 40S subunit contains about 33 different proteins and 1 molecule of RNA (18S). The 60S subunit contains about 49 different proteins and 3 molecules of RNA (25S, 5.8S and 5S).

It is found in the cytoplasm. In Podospora anserina (strain S / ATCC MYA-4624 / DSM 980 / FGSC 10383) (Pleurage anserina), this protein is Small ribosomal subunit protein eS1.